Here is a 247-residue protein sequence, read N- to C-terminus: Mycofactocin precursor peptide peptidase (247 aa).

A divalent metal cation contacts are provided by Glu38, His40, Asp49, His124, and Glu163.

This sequence belongs to the creatininase superfamily. Homooctamer. Fe(2+) serves as cofactor. The cofactor is Zn(2+).

The catalysed reaction is [mycofactocin precursor peptide]-C-terminal glycyl-N-{5-[(4-hydroxyphenyl)methyl]-4,4-dimethyl-2-oxopyrrolidin-3-yl}acetamide + H2O = [mycofactocin precursor peptide]-C-terminal glycine + 3-amino-5-[(4-hydroxyphenyl)methyl]-4,4-dimethyl-2-pyrrolidin-2-one. In terms of biological role, peptidase involved in the biosynthesis of the enzyme cofactor mycofactocin (MFT). Catalyzes cleavage of the MftC-modified MftA peptide to liberate its final two residues, which consist of a cross-linked valine-decarboxylated tyrosine dipeptide (named 3-amino-5-[(4-hydroxyphenyl)methyl]-4,4-dimethyl-2-pyrrolidin-2-one or ADHP). Is required for the in vivo ethanol assimilation in M.smegmatis. This is Mycofactocin precursor peptide peptidase from Mycolicibacterium smegmatis (strain ATCC 700084 / mc(2)155) (Mycobacterium smegmatis).